Reading from the N-terminus, the 315-residue chain is Gamma-hemolysin component C (315 aa).

An N-terminal signal peptide occupies residues 1–29; sequence MLKNKILATTLSVSLLAPLANPLLENAKA.

Belongs to the aerolysin family. In terms of assembly, toxicity requires sequential binding and synergistic association of a class S and a class F component which form heterooligomeric complexes. HlgC (class S) associates with HlgB (class F) thus forming an CB toxin.

Functionally, toxin that seems to act by forming pores in the membrane of the cell. Has a hemolytic and a leucotoxic activity. The chain is Gamma-hemolysin component C (hlgC) from Staphylococcus aureus (strain MSSA476).